Reading from the N-terminus, the 656-residue chain is Heparan-alpha-glucosaminide N-acetyltransferase (656 aa).

The segment at 1 to 31 is disordered; the sequence is MTGGSSSRRRRAEERSSAAGTERNSRREAVG. The Lumenal, vesicle portion of the chain corresponds to 1 to 185; it reads MTGGSSSRRR…IIVNENPVDS (185 aa). N-linked (GlcNAc...) asparagine glycans are attached at residues Asn-137 and Asn-157. Cys-146 and Cys-455 are oxidised to a cystine. The helical transmembrane segment at 186–206 threads the bilayer; that stretch reads NLPVSIAFLVGLALIVAVSLL. Residues 207–268 lie on the Cytoplasmic side of the membrane; that stretch reads RLLLSLDDVN…NRLRCVDTFR (62 aa). Residues 234 to 253 form a disordered region; sequence SELGSPSRADPLSADYQPET. 2 positions are modified to phosphoserine: Ser-238 and Ser-240. At Tyr-249 the chain carries Phosphotyrosine. Residues 269–289 form a helical membrane-spanning segment; the sequence is GLALVLMVFVNYGGGKYWYFK. The active site involves His-290. At 290-295 the chain is on the lumenal, vesicle side; sequence HSSWNG. Residues 296–316 form a helical membrane-spanning segment; sequence LTVADLVFPWFVFIMGTSIFL. The Cytoplasmic segment spans residues 317–338; it reads SMTSILQRGCSKLKLLGKIVWR. Residues 339–359 traverse the membrane as a helical segment; that stretch reads SFLLICIGVIIVNPNYCLGPL. Over 360 to 367 the chain is Lumenal, vesicle; that stretch reads SWDKVRIP. The chain crosses the membrane as a helical span at residues 368–388; that stretch reads GVLQRLGVTYFVVAVLEFFFW. Over 389-413 the chain is Cytoplasmic; it reads KPVPDSCTLESSCFSLRDITSSWPQ. The chain crosses the membrane as a helical span at residues 414–434; the sequence is WLTILTLESIWLALTFFLPVP. Residues 435-493 are Lumenal, vesicle-facing; the sequence is GCPTGYLGPGGIGDLGKYPHCTGGAAGYIDRLLLGDNHLYQHPSSTVLYHTEVAYDPEG. Residues 494 to 514 form a helical membrane-spanning segment; that stretch reads VLGTINSIVMAFLGVQAGKIL. At 515–522 the chain is on the cytoplasmic side; it reads VYYKDQTK. A helical transmembrane segment spans residues 523-543; the sequence is AILTRFAAWCCILGLISIVLT. At 544-557 the chain is on the lumenal, vesicle side; it reads KVSANEGFIPINKN. Residues 558 to 578 traverse the membrane as a helical segment; the sequence is LWSISYVTTLSCFAFFILLIL. The Cytoplasmic segment spans residues 579-585; that stretch reads YPVVDVK. The helical transmembrane segment at 586–606 threads the bilayer; that stretch reads GLWTGTPFFYPGMNSILVYVG. The Lumenal, vesicle portion of the chain corresponds to 607–627; sequence HEVLENYFPFQWKLADEQSHK. Residues 628–648 traverse the membrane as a helical segment; sequence EHLIQNIVATALWVLIAYVLY. The interval 641–656 is lysosomal targeting region; that stretch reads VLIAYVLYKKKLFWKI. The Cytoplasmic segment spans residues 649 to 656; sequence KKKLFWKI.

As to quaternary structure, homooligomer. Homooligomerization is necessary for enzyme activity. Undergoes intralysosomal proteolytic cleavage; occurs within the end of the first and/or the beginning of the second luminal domain and is essential for the activation of the enzyme. Post-translationally, glycosylated. In terms of tissue distribution, expressed in the retina.

The protein localises to the lysosome membrane. It carries out the reaction alpha-D-glucosaminyl-[heparan sulfate](n) + acetyl-CoA = N-acetyl-alpha-D-glucosaminyl-[heparan sulfate](n) + CoA + H(+). Lysosomal acetyltransferase that acetylates the non-reducing terminal alpha-glucosamine residue of intralysosomal heparin or heparan sulfate, converting it into a substrate for luminal alpha-N-acetyl glucosaminidase. This Mus musculus (Mouse) protein is Heparan-alpha-glucosaminide N-acetyltransferase (Hgsnat).